The chain runs to 61 residues: Small ribosomal subunit protein uS14 (61 aa).

Cys24, Cys27, Cys40, and Cys43 together coordinate Zn(2+).

This sequence belongs to the universal ribosomal protein uS14 family. Zinc-binding uS14 subfamily. Part of the 30S ribosomal subunit. Contacts proteins S3 and S10. Zn(2+) serves as cofactor.

Its function is as follows. Binds 16S rRNA, required for the assembly of 30S particles and may also be responsible for determining the conformation of the 16S rRNA at the A site. This chain is Small ribosomal subunit protein uS14, found in Geotalea daltonii (strain DSM 22248 / JCM 15807 / FRC-32) (Geobacter daltonii).